The following is a 115-amino-acid chain: Large ribosomal subunit protein bL19 (115 aa).

The protein belongs to the bacterial ribosomal protein bL19 family.

In terms of biological role, this protein is located at the 30S-50S ribosomal subunit interface and may play a role in the structure and function of the aminoacyl-tRNA binding site. In Nitratidesulfovibrio vulgaris (strain ATCC 29579 / DSM 644 / CCUG 34227 / NCIMB 8303 / VKM B-1760 / Hildenborough) (Desulfovibrio vulgaris), this protein is Large ribosomal subunit protein bL19.